The chain runs to 318 residues: Methionyl-tRNA formyltransferase (318 aa).

(6S)-5,6,7,8-tetrahydrofolate is bound at residue 112–115 (SILP).

It belongs to the Fmt family.

It carries out the reaction L-methionyl-tRNA(fMet) + (6R)-10-formyltetrahydrofolate = N-formyl-L-methionyl-tRNA(fMet) + (6S)-5,6,7,8-tetrahydrofolate + H(+). Its function is as follows. Attaches a formyl group to the free amino group of methionyl-tRNA(fMet). The formyl group appears to play a dual role in the initiator identity of N-formylmethionyl-tRNA by promoting its recognition by IF2 and preventing the misappropriation of this tRNA by the elongation apparatus. The sequence is that of Methionyl-tRNA formyltransferase from Shewanella sp. (strain MR-4).